The primary structure comprises 404 residues: S-adenosylmethionine synthase (404 aa).

H18 provides a ligand contact to ATP. Residue D20 coordinates Mg(2+). E46 is a K(+) binding site. L-methionine is bound by residues E59 and Q102. Residues 102–112 are flexible loop; the sequence is QSPEIAQGVDH. ATP is bound by residues 178–180, 249–250, D258, 264–265, A281, and K285; these read DGK, KF, and RK. Residue D258 coordinates L-methionine. Residue K289 participates in L-methionine binding.

This sequence belongs to the AdoMet synthase family. As to quaternary structure, homotetramer; dimer of dimers. Requires Mg(2+) as cofactor. K(+) serves as cofactor.

Its subcellular location is the cytoplasm. It carries out the reaction L-methionine + ATP + H2O = S-adenosyl-L-methionine + phosphate + diphosphate. The protein operates within amino-acid biosynthesis; S-adenosyl-L-methionine biosynthesis; S-adenosyl-L-methionine from L-methionine: step 1/1. In terms of biological role, catalyzes the formation of S-adenosylmethionine (AdoMet) from methionine and ATP. The overall synthetic reaction is composed of two sequential steps, AdoMet formation and the subsequent tripolyphosphate hydrolysis which occurs prior to release of AdoMet from the enzyme. The polypeptide is S-adenosylmethionine synthase (Rhodococcus opacus (strain B4)).